Reading from the N-terminus, the 93-residue chain is RNA-binding protein Hfq (93 aa).

In terms of domain architecture, Sm spans Asp9–Ile68. Low complexity predominate over residues His70–Ala81. The interval His70 to Glu93 is disordered.

Belongs to the Hfq family. As to quaternary structure, homohexamer.

In terms of biological role, RNA chaperone that binds small regulatory RNA (sRNAs) and mRNAs to facilitate mRNA translational regulation in response to envelope stress, environmental stress and changes in metabolite concentrations. Also binds with high specificity to tRNAs. The polypeptide is RNA-binding protein Hfq (Glaesserella parasuis serovar 5 (strain SH0165) (Haemophilus parasuis)).